A 413-amino-acid polypeptide reads, in one-letter code: uncharacterized protein (413 aa).

At K265 the chain carries N6-(pyridoxal phosphate)lysine.

Belongs to the threonine aldolase family. Pyridoxal 5'-phosphate serves as cofactor.

This is an uncharacterized protein from Caenorhabditis elegans.